The chain runs to 71 residues: Cytochrome c oxidase subunit 7, mitochondrial (71 aa).

Topologically, residues 1–35 (MPGLVNAPNHVPEKQRYYQQAFKNHTRLWKIGPRS) are mitochondrial matrix. The helical transmembrane segment at 36–58 (GIIMTTFNIAMWGTFGASMYAMS) threads the bilayer. Residues 59 to 71 (RKVLGYNTWFSED) lie on the Mitochondrial intermembrane side of the membrane.

Belongs to the cytochrome c oxidase VIIa family. As to quaternary structure, component of the cytochrome c oxidase (complex IV, CIV), a multisubunit enzyme composed of 11 subunits. The complex is composed of a catalytic core of 3 subunits Cox1, Cox2 and Cox3, encoded in the mitochondrial DNA, and 8 supernumerary subunits Cox4, Cox5a/Cox5, Cox6, Cox7, Cox8, Cox7a/Cox9, Cox6b/Cox12 and Cox6a/Cox13, which are encoded in the nuclear genome. The complex exists as a monomer or a dimer and forms respiratory supercomplexes (SCs) in the inner mitochondrial membrane with NADH-ubiquinone oxidoreductase (complex I, CI) and ubiquinol-cytochrome c oxidoreductase (cytochrome b-c1 complex, complex III, CIII), resulting in various different assemblies (supercomplexes I(1)IV(1), I(1)III(3)IV(2), III(2)IV(1) and III(2)IV(2) as well as larger supercomplexes of compositions like I(1)III(2)IV(5-6)).

It is found in the mitochondrion inner membrane. It participates in energy metabolism; oxidative phosphorylation. Functionally, component of the cytochrome c oxidase, the last enzyme in the mitochondrial electron transport chain which drives oxidative phosphorylation. The respiratory chain contains 3 multisubunit complexes succinate dehydrogenase (complex II, CII), ubiquinol-cytochrome c oxidoreductase (cytochrome b-c1 complex, complex III, CIII) and cytochrome c oxidase (complex IV, CIV), that cooperate to transfer electrons derived from NADH and succinate to molecular oxygen, creating an electrochemical gradient over the inner membrane that drives transmembrane transport and the ATP synthase. Cytochrome c oxidase is the component of the respiratory chain that catalyzes the reduction of oxygen to water. Electrons originating from reduced cytochrome c in the intermembrane space (IMS) are transferred via the dinuclear copper A center (CU(A)) of Cox2 and heme A of Cox1 to the active site in Cox1, a binuclear center (BNC) formed by heme A3 and copper B (CU(B)). The BNC reduces molecular oxygen to 2 water molecules using 4 electrons from cytochrome c in the IMS and 4 protons from the mitochondrial matrix. The sequence is that of Cytochrome c oxidase subunit 7, mitochondrial from Neurospora crassa (strain ATCC 24698 / 74-OR23-1A / CBS 708.71 / DSM 1257 / FGSC 987).